Reading from the N-terminus, the 229-residue chain is Large ribosomal subunit protein uL1 (229 aa).

The protein belongs to the universal ribosomal protein uL1 family. As to quaternary structure, part of the 50S ribosomal subunit.

Functionally, binds directly to 23S rRNA. The L1 stalk is quite mobile in the ribosome, and is involved in E site tRNA release. In terms of biological role, protein L1 is also a translational repressor protein, it controls the translation of the L11 operon by binding to its mRNA. In Streptococcus sanguinis (strain SK36), this protein is Large ribosomal subunit protein uL1.